The following is a 583-amino-acid chain: MKPYTDFEPPPALAVTPAGRRRLAELQKLHSAAGESLLVDEEAAAAGILRIEFSWPLNDGRTIGLRAVYPDTFPRLRPHVFLTCDPSEYPERHCGSEGALCLLGRDTRYWQANMSLAELLDENLAHVLDGTGAEDPQGEPIEYWWNSLGQASGSFVLVDSRWKLSGYDEGTVDVLVNASRTEIGRTIRAAILSVRAGDGSLLGERVAPLPAAVSSTAIRAFPWRRDDQLSLPTGSAEQTVGKVAYGKTYVTCDGADIRLSFTISRTELQHNEHGDAWVCGMAVREHISHSSRRGPRRKDTVPSIVPVFRDGEIDIGYRVPSVASLRGKRIAVVGLGALGSPAAVELARNGCTSLHLMDDDVVEPGNTIRWELGASSWGTKKQDALKRFIEREFPWTSVLAVPHRIGLPNCDPHIPGETDRLNELLDSVDLVVDASAAPGVTYLLGDICRERGLSLISVFASPNLHGGAVVFHHPESGCPVCMAHANETPEGKSGHIPYPNGMNDESTLVQPPGCSELTFTGASFDLKELSLETVRMAVDVLSSPDEWTVSEVRTVNLHNVKRRMPPSWRIDPLERHPDCGCRS.

This is an uncharacterized protein from Sinorhizobium fredii (strain NBRC 101917 / NGR234).